We begin with the raw amino-acid sequence, 359 residues long: WAT1-related protein At4g16620 (359 aa).

Transmembrane regions (helical) follow at residues 5–25 (ETLI…IYAG), 41–61 (LLIV…LAFL), 77–97 (IKLV…FLEG), 105–125 (MATA…WAAG), 143–163 (TVLC…TATL), 183–203 (ILGC…IVLQ), 206–226 (ILAE…MGGI), 246–266 (VIGL…SGGG), 279–299 (PVIV…VSAF), and 305–325 (FNLG…FVLW). The EamA 1 domain occupies 30–154 (LSQLLSLGID…LCVMGALIMS (125 aa)). The EamA 2 domain occupies 206–324 (ILAEFPAPIS…LMFGGLYFVL (119 aa)).

This sequence belongs to the drug/metabolite transporter (DMT) superfamily. Plant drug/metabolite exporter (P-DME) (TC 2.A.7.4) family.

Its subcellular location is the membrane. The chain is WAT1-related protein At4g16620 from Arabidopsis thaliana (Mouse-ear cress).